Reading from the N-terminus, the 176-residue chain is Cytochrome b (176 aa).

The next 3 helical transmembrane spans lie at 33-53 (FGSL…FLAM), 77-98 (WLLR…YLHI), and 113-133 (WNVG…GYVL). Residues H83 and H97 each coordinate heme b.

Belongs to the cytochrome b family. The cytochrome bc1 complex contains 11 subunits: 3 respiratory subunits (MT-CYB, CYC1 and UQCRFS1), 2 core proteins (UQCRC1 and UQCRC2) and 6 low-molecular weight proteins (UQCRH/QCR6, UQCRB/QCR7, UQCRQ/QCR8, UQCR10/QCR9, UQCR11/QCR10 and a cleavage product of UQCRFS1). This cytochrome bc1 complex then forms a dimer. The cofactor is heme b.

Its subcellular location is the mitochondrion inner membrane. Component of the ubiquinol-cytochrome c reductase complex (complex III or cytochrome b-c1 complex) that is part of the mitochondrial respiratory chain. The b-c1 complex mediates electron transfer from ubiquinol to cytochrome c. Contributes to the generation of a proton gradient across the mitochondrial membrane that is then used for ATP synthesis. The polypeptide is Cytochrome b (MT-CYB) (Promops centralis (Big crested mastiff bat)).